An 867-amino-acid polypeptide reads, in one-letter code: Bifunctional isopimaradiene synthase, chloroplastic (867 aa).

The N-terminal 68 residues, 1–68, are a transit peptide targeting the chloroplast; it reads MALLSSSLSS…VGEGTTSLPY (68 aa). Lysine 267 contacts substrate. Residues aspartate 400 and aspartate 402 each coordinate Mg(2+). Residues 400-403 carry the DXDD motif motif; that stretch reads DIDD. Lysine 487 is a substrate binding site. The Mg(2+) site is built by aspartate 619, aspartate 623, asparagine 763, threonine 767, and glutamate 771. The short motif at 619 to 623 is the DDXXD motif element; the sequence is DDLYD.

Belongs to the terpene synthase family. Tpsd subfamily. Requires Mg(2+) as cofactor.

The protein localises to the plastid. The protein resides in the chloroplast. It catalyses the reaction (2E,6E,10E)-geranylgeranyl diphosphate = (+)-copalyl diphosphate. It carries out the reaction (+)-copalyl diphosphate = isopimara-7,15-diene + diphosphate. It participates in terpene metabolism; oleoresin biosynthesis. Involved in defensive oleoresin formation in conifers in response to insect attack or other injury. Involved in diterpene (C20) olefins biosynthesis. Bifunctional enzyme that catalyzes two sequential cyclizations of geranylgeranyl diphosphate (GGPP) to isopimara-7,15-diene. The sequence is that of Bifunctional isopimaradiene synthase, chloroplastic (TPS-ISO) from Picea abies (Norway spruce).